A 912-amino-acid chain; its full sequence is MINSLLTRVFGSRNERQLRQLNRLVTQINALEPTIEKLSDAELQAKTPEFKQRLAAGESLDKILPEAFAVCREASRRVLGMRHYDVQLIGGMVLHLGKIAEMRTGEGKTLVATLPVYLNALQGEGVHVVTVNDYLARRDAAQMGKLYNWLGLSVGVVYPGMPHSDKREAYGADITYGTNNEFGFDYLRDNMALSRADRYQRNLHYAIVDEVDSILIDEARTPLIISGPADESPELYIRVNRIVPQLTRQESEEGEGDFWIDEKGKQVHLSEAGMGHAEELLLQAGILENAEDGLYAAQNLSVVHHLNAALRAHAIYQRDVDYIVRDGEVVIVDEFTGRTLSGRRWSDGLHQAVEAKEGVPVQRENQTLASITFQNLFRMYKKLSGMTGTADTEAYEFQSIYGLEVVVIPTNRPTVRKDHPDQVFLNRKGKFNAVLADIEDCAKRGQPVLVGTTSIETSEMLSEHLRKAGVKHEVLNAKQHEREATIVANAGQPGAVTIATNMAGRGTDIVLGGSLESEYHALGEDATEDARFKIKTDWQRRHDAVKAAGGLHIIGTERHESRRIDNQLRGRAGRQGDPGSSRFYLSLEDNLMRIFASDWVQKAMRMMGMKEDDVIEDRLVSRQIEKAQRKVEAHNFDIRKNLLDFDDVNNDQRKVIYAQRDELLDAESVKDNVDGIRGDVIYDLVARFVPPNSVDEQWDLKGLEATLESELGMSLSLTDMVRAQEEIDAEQIAAKVQTAVDAHFAEKEAAIGADTMRALEKHVMLTVLDQGWKEHLAKMDYLRQGIYLRGYAQKQPKQEYKKEAFELFSEMLENVKREVINLLARVRIRSEEEVAELEEQERLQAQARLMASQFQHQDVGGYGADEEVEQMQGGNAPVPVSQVTRDEPKVGRNDPCPCGSGKKYKHCHGQLS.

Residues glutamine 87, 105–109, and aspartate 508 contribute to the ATP site; that span reads GEGKT. The segment at 869 to 912 is disordered; sequence EQMQGGNAPVPVSQVTRDEPKVGRNDPCPCGSGKKYKHCHGQLS. Zn(2+)-binding residues include cysteine 896, cysteine 898, cysteine 907, and histidine 908. Residues 902 to 912 show a composition bias toward basic residues; sequence KKYKHCHGQLS.

The protein belongs to the SecA family. In terms of assembly, monomer and homodimer. Part of the essential Sec protein translocation apparatus which comprises SecA, SecYEG and auxiliary proteins SecDF-YajC and YidC. Zn(2+) is required as a cofactor.

Its subcellular location is the cell inner membrane. The protein localises to the cytoplasm. The enzyme catalyses ATP + H2O + cellular proteinSide 1 = ADP + phosphate + cellular proteinSide 2.. Functionally, part of the Sec protein translocase complex. Interacts with the SecYEG preprotein conducting channel. Has a central role in coupling the hydrolysis of ATP to the transfer of proteins into and across the cell membrane, serving both as a receptor for the preprotein-SecB complex and as an ATP-driven molecular motor driving the stepwise translocation of polypeptide chains across the membrane. The protein is Protein translocase subunit SecA of Xanthomonas axonopodis pv. citri (strain 306).